We begin with the raw amino-acid sequence, 441 residues long: Protein arginine methyltransferase NDUFAF7, mitochondrial (441 aa).

Residues 1 to 46 (MNFLAAAGVRRLCAMRAVLPCLWRGKYFSSGNEPAENNTVTPMLRH) constitute a mitochondrion transit peptide. The disordered stretch occupies residues 415 to 434 (GRNHQTNARQSKPSPSPVAG). The segment covering 418–427 (HQTNARQSKP) has biased composition (polar residues).

This sequence belongs to the NDUFAF7 family. As to quaternary structure, interacts with NDUFS2.

The protein localises to the mitochondrion. It catalyses the reaction L-arginyl-[protein] + 2 S-adenosyl-L-methionine = N(omega),N(omega)'-dimethyl-L-arginyl-[protein] + 2 S-adenosyl-L-homocysteine + 2 H(+). In terms of biological role, arginine methyltransferase involved in the assembly or stability of mitochondrial NADH:ubiquinone oxidoreductase complex (complex I). Acts by mediating symmetric dimethylation of 'Arg-118' of NDUFS2 after it assembles into the complex I, stabilizing the early intermediate complex. The chain is Protein arginine methyltransferase NDUFAF7, mitochondrial from Bos taurus (Bovine).